A 90-amino-acid polypeptide reads, in one-letter code: Defensin-like protein 193 (90 aa).

A signal peptide spans 1-27 (MAMKSVSTLAVFAILFLVIVEMPEIKA). 4 disulfides stabilise this stretch: Cys-32–Cys-86, Cys-45–Cys-69, Cys-54–Cys-81, and Cys-58–Cys-83.

It belongs to the DEFL family. Protease inhibitor I18 (RTI/MTI-2) subfamily.

It is found in the secreted. The protein is Defensin-like protein 193 (ATTI2) of Arabidopsis thaliana (Mouse-ear cress).